Here is a 123-residue protein sequence, read N- to C-terminus: Small ribosomal subunit protein uS12cz/uS12cy (123 aa).

It belongs to the universal ribosomal protein uS12 family. Part of the 30S ribosomal subunit.

The protein localises to the plastid. The protein resides in the chloroplast. Its function is as follows. With S4 and S5 plays an important role in translational accuracy. Located at the interface of the 30S and 50S subunits. This Populus alba (White poplar) protein is Small ribosomal subunit protein uS12cz/uS12cy (rps12-A).